The sequence spans 193 residues: Anthranilate synthase component 2 (193 aa).

Positions 3–193 constitute a Glutamine amidotransferase type-1 domain; it reads DILLLDNVDS…EQTLAWALAK (191 aa). 57 to 59 serves as a coordination point for L-glutamine; it reads GPG. The active-site Nucleophile; for GATase activity is the C84. L-glutamine is bound by residues Q88 and 134 to 135; that span reads SL. Catalysis depends on for GATase activity residues H170 and E172.

As to quaternary structure, heterotetramer consisting of two non-identical subunits: a beta subunit (TrpG) and a large alpha subunit (TrpE).

It carries out the reaction chorismate + L-glutamine = anthranilate + pyruvate + L-glutamate + H(+). It participates in amino-acid biosynthesis; L-tryptophan biosynthesis; L-tryptophan from chorismate: step 1/5. Functionally, part of a heterotetrameric complex that catalyzes the two-step biosynthesis of anthranilate, an intermediate in the biosynthesis of L-tryptophan. In the first step, the glutamine-binding beta subunit (TrpG) of anthranilate synthase (AS) provides the glutamine amidotransferase activity which generates ammonia as a substrate that, along with chorismate, is used in the second step, catalyzed by the large alpha subunit of AS (TrpE) to produce anthranilate. In the absence of TrpG, TrpE can synthesize anthranilate directly from chorismate and high concentrations of ammonia. In Serratia marcescens, this protein is Anthranilate synthase component 2 (trpG).